We begin with the raw amino-acid sequence, 291 residues long: Flavin-dependent thymidylate synthase (291 aa).

One can recognise a ThyX domain in the interval 31 to 241 (GFVRVVDYMG…PMVHAAFVEY (211 aa)). FAD is bound by residues S77, 100-102 (RHR), and E108. Residues 97-100 (QWVR), 108-112 (EYSAR), and R180 contribute to the dUMP site. The ThyX motif signature appears at 100–110 (RHRTASINEYS). An FAD-binding site is contributed by 196-198 (NLH). R207 provides a ligand contact to dUMP. R207 acts as the Involved in ionization of N3 of dUMP, leading to its activation in catalysis.

Belongs to the thymidylate synthase ThyX family. Homotetramer. It depends on FAD as a cofactor.

It catalyses the reaction dUMP + (6R)-5,10-methylene-5,6,7,8-tetrahydrofolate + NADPH + H(+) = dTMP + (6S)-5,6,7,8-tetrahydrofolate + NADP(+). Its pathway is pyrimidine metabolism; dTTP biosynthesis. Catalyzes the reductive methylation of 2'-deoxyuridine-5'-monophosphate (dUMP) to 2'-deoxythymidine-5'-monophosphate (dTMP) while utilizing 5,10-methylenetetrahydrofolate (mTHF) as the methyl donor, and NADPH and FADH(2) as the reductant. This Anaplasma marginale (strain St. Maries) protein is Flavin-dependent thymidylate synthase.